We begin with the raw amino-acid sequence, 337 residues long: Anthranilate phosphoribosyltransferase (337 aa).

5-phospho-alpha-D-ribose 1-diphosphate contacts are provided by residues glycine 79, 82–83 (GD), threonine 87, 89–92 (NVST), 107–115 (KHGNRSVSS), and serine 119. Glycine 79 provides a ligand contact to anthranilate. Serine 91 provides a ligand contact to Mg(2+). Anthranilate is bound at residue asparagine 110. Arginine 165 serves as a coordination point for anthranilate. Mg(2+) contacts are provided by aspartate 223 and glutamate 224.

This sequence belongs to the anthranilate phosphoribosyltransferase family. In terms of assembly, homodimer. Mg(2+) is required as a cofactor.

The enzyme catalyses N-(5-phospho-beta-D-ribosyl)anthranilate + diphosphate = 5-phospho-alpha-D-ribose 1-diphosphate + anthranilate. Its pathway is amino-acid biosynthesis; L-tryptophan biosynthesis; L-tryptophan from chorismate: step 2/5. Functionally, catalyzes the transfer of the phosphoribosyl group of 5-phosphorylribose-1-pyrophosphate (PRPP) to anthranilate to yield N-(5'-phosphoribosyl)-anthranilate (PRA). This Aeromonas salmonicida (strain A449) protein is Anthranilate phosphoribosyltransferase.